A 367-amino-acid polypeptide reads, in one-letter code: Tetraacyldisaccharide 4'-kinase (367 aa).

68–75 (VLGGSGKT) is an ATP binding site.

The protein belongs to the LpxK family.

The catalysed reaction is a lipid A disaccharide + ATP = a lipid IVA + ADP + H(+). It functions in the pathway glycolipid biosynthesis; lipid IV(A) biosynthesis; lipid IV(A) from (3R)-3-hydroxytetradecanoyl-[acyl-carrier-protein] and UDP-N-acetyl-alpha-D-glucosamine: step 6/6. Functionally, transfers the gamma-phosphate of ATP to the 4'-position of a tetraacyldisaccharide 1-phosphate intermediate (termed DS-1-P) to form tetraacyldisaccharide 1,4'-bis-phosphate (lipid IVA). In Chlamydia abortus (strain DSM 27085 / S26/3) (Chlamydophila abortus), this protein is Tetraacyldisaccharide 4'-kinase.